The sequence spans 919 residues: Isoleucine--tRNA ligase (919 aa).

Positions 59 to 69 match the 'HIGH' region motif; that stretch reads PYANGHLHIGH. E570 lines the L-isoleucyl-5'-AMP pocket. A 'KMSKS' region motif is present at residues 611–615; the sequence is KMSKS. Residue K614 participates in ATP binding. Residues C893, C896, C908, and C911 each contribute to the Zn(2+) site.

This sequence belongs to the class-I aminoacyl-tRNA synthetase family. IleS type 1 subfamily. In terms of assembly, monomer. Requires Zn(2+) as cofactor.

The protein resides in the cytoplasm. The enzyme catalyses tRNA(Ile) + L-isoleucine + ATP = L-isoleucyl-tRNA(Ile) + AMP + diphosphate. Its function is as follows. Catalyzes the attachment of isoleucine to tRNA(Ile). As IleRS can inadvertently accommodate and process structurally similar amino acids such as valine, to avoid such errors it has two additional distinct tRNA(Ile)-dependent editing activities. One activity is designated as 'pretransfer' editing and involves the hydrolysis of activated Val-AMP. The other activity is designated 'posttransfer' editing and involves deacylation of mischarged Val-tRNA(Ile). This is Isoleucine--tRNA ligase from Campylobacter curvus (strain 525.92).